A 155-amino-acid chain; its full sequence is Aspartate carbamoyltransferase regulatory chain (155 aa).

Zn(2+) is bound by residues Cys112, Cys117, Cys140, and Cys143.

The protein belongs to the PyrI family. Contains catalytic and regulatory chains. Zn(2+) serves as cofactor.

Functionally, involved in allosteric regulation of aspartate carbamoyltransferase. The chain is Aspartate carbamoyltransferase regulatory chain from Phocaeicola vulgatus (strain ATCC 8482 / DSM 1447 / JCM 5826 / CCUG 4940 / NBRC 14291 / NCTC 11154) (Bacteroides vulgatus).